The primary structure comprises 170 residues: UPF0161 protein At3g09310 (170 aa).

Disordered stretches follow at residues 49–70 (CLSAKSTPSKPDPASPQDGEEL) and 147–170 (SGIKLREGDEEEEDNYDDEDQRKI). Positions 154–170 (GDEEEEDNYDDEDQRKI) are enriched in acidic residues.

Belongs to the UPF0161 family.

The chain is UPF0161 protein At3g09310 from Arabidopsis thaliana (Mouse-ear cress).